Consider the following 477-residue polypeptide: Peroxisome proliferator-activated receptor gamma (477 aa).

At Ser87 the chain carries Phosphoserine; by MAPK. A DNA-binding region (nuclear receptor) is located at residues 110–184; sequence AIECRVCGDK…VGMSHNAIRF (75 aa). 2 consecutive NR C4-type zinc fingers follow at residues 113–133 and 150–172; these read CRVC…CEGC and CDLN…FQKC. The interval 231-281 is disordered; the sequence is TKAKAPGHPDGQSHRQNSRGYTRHELADDGGGSDQGAVREPRAEQGGGDSN. Residues 252 to 475 enclose the NR LBD domain; it reads TRHELADDGG…HPLLQEIYKD (224 aa). A 9aaTAD motif is present at residues 467 to 475; sequence PLLQEIYKD.

It belongs to the nuclear hormone receptor family. NR1 subfamily. In terms of assembly, heterodimer with the retinoid X receptor. In terms of tissue distribution, expressed mainly in adipose tissue and kidney.

The protein localises to the nucleus. The protein resides in the cytoplasm. In terms of biological role, receptor that binds peroxisome proliferators such as hypolipidemic drugs and fatty acids. Once activated by a ligand, the receptor binds to a promoter element in the gene for acyl-CoA oxidase and activates its transcription. It therefore controls the peroxisomal beta-oxidation pathway of fatty acids. Key regulator of adipocyte differentiation and glucose homeostasis. May play a role in the regulation of circadian rhythm. The sequence is that of Peroxisome proliferator-activated receptor gamma (pparg) from Xenopus laevis (African clawed frog).